The chain runs to 122 residues: Seminal vesicle secretory protein 5 (122 aa).

The signal sequence occupies residues 1 to 21 (MSPTSFFLLTLLLVLVTEARG). The tract at residues 23–122 (RERFSQSAED…KTRVKSRILK (100 aa)) is disordered. Positions 27–37 (SQSAEDPSSSH) are enriched in polar residues.

The protein belongs to the SVP2/SVP5/SVP6 family. As to expression, testis.

The protein resides in the secreted. It is found in the extracellular space. The sequence is that of Seminal vesicle secretory protein 5 (Svs5) from Mus musculus (Mouse).